A 437-amino-acid chain; its full sequence is Probable E3 ubiquitin-protein ligase TRIML2 (437 aa).

The B box-type zinc finger occupies 14-55; the sequence is TEDAYCETHLEPTRLFCDVDQITLCSKCFQSQEHKHHMVCGI. Positions 19, 22, 41, and 47 each coordinate Zn(2+). The stretch at 55 to 200 forms a coiled coil; that stretch reads IQEAAENYRK…IVELEKKCGE (146 aa). Residues 231–429 enclose the B30.2/SPRY domain; it reads DLSLCHIRGL…DSLTILQHGP (199 aa).

The catalysed reaction is S-ubiquitinyl-[E2 ubiquitin-conjugating enzyme]-L-cysteine + [acceptor protein]-L-lysine = [E2 ubiquitin-conjugating enzyme]-L-cysteine + N(6)-ubiquitinyl-[acceptor protein]-L-lysine.. The protein operates within protein modification; protein ubiquitination. This Homo sapiens (Human) protein is Probable E3 ubiquitin-protein ligase TRIML2.